The following is a 314-amino-acid chain: Three-prime repair exonuclease 1 (314 aa).

Mg(2+) is bound by residues aspartate 18 and glutamate 20. 20 to 21 (EA) serves as a coordination point for substrate. Serine 78 bears the Phosphoserine mark. Tyrosine 129 lines the substrate pocket. Serine 167 carries the post-translational modification Phosphoserine. The active-site Proton donor/acceptor is histidine 195. Residue aspartate 200 coordinates Mg(2+). Aspartate 200 serves as a coordination point for substrate. Residues 236–314 (TASARTKPRP…YGLSLATPGE (79 aa)) form a necessary for endoplasmic reticulum localization region. Residues 240–278 (RTKPRPSAVTTTAHLATTRNTSPSLGESRGTKDLPPVKD) are disordered. Residues 243-314 (PRPSAVTTTA…YGLSLATPGE (72 aa)) are interaction with UBQLN1. A compositionally biased stretch (low complexity) spans 247-260 (AVTTTAHLATTRNT). A Phosphoserine modification is found at serine 261. A necessary for cytoplasmic retention region spans residues 281–314 (ALSREGLLAPLGLLAILTLAVATLYGLSLATPGE).

The protein belongs to the exonuclease superfamily. TREX family. In terms of assembly, homodimer. Interacts (via proline-rich region) with TCERG1/CA150 (via the second WW domain). Component of the SET complex, composed of at least ANP32A, APEX1, HMGB2, NME1, SET and TREX1. Within this complex, directly interacts with SET; this interaction does not result in TREX1 inhibition. Also interacts with NME1, but only following translocation to the nucleus. Directly interacts with UBQLN1 (via ubiquitin-like domain); the interaction may control TREX1 subcellular location. Mg(2+) serves as cofactor. Ubiquitinated, but not targeted to proteasomal degradation. Ubiquitination may be important for interaction with UBQLN1. In terms of tissue distribution, detected in thymus, spleen, liver, brain, heart, small intestine and colon.

Its subcellular location is the nucleus. The protein resides in the cytoplasm. It localises to the cytosol. The protein localises to the endoplasmic reticulum membrane. It carries out the reaction Exonucleolytic cleavage in the 3'- to 5'-direction to yield nucleoside 5'-phosphates.. Its function is as follows. Major cellular 3'-to-5' DNA exonuclease which digests single-stranded DNA (ssDNA) and double-stranded DNA (dsDNA) with mismatched 3' termini. Prevents cell-intrinsic initiation of autoimmunity. Acts by metabolizing DNA fragments from endogenous retroelements, including L1, LTR and SINE elements. Plays a key role in degradation of DNA fragments at cytosolic micronuclei arising from genome instability: its association with the endoplasmic reticulum membrane directs TREX1 to ruptured micronuclei, leading to micronuclear DNA degradation. Micronuclear DNA degradation is required to limit CGAS activation and subsequent inflammation. Unless degraded, these DNA fragments accumulate in the cytosol and activate the cGAS-STING innate immune signaling, leading to the production of type I interferon. Prevents chronic ATM-dependent checkpoint activation, by processing ssDNA polynucleotide species arising from the processing of aberrant DNA replication intermediates. Inefficiently degrades oxidized DNA, such as that generated upon antimicrobial reactive oxygen production or upon absorption of UV light. During GZMA-mediated cell death, contributes to DNA damage in concert with NME1. NME1 nicks one strand of DNA and TREX1 removes bases from the free 3' end to enhance DNA damage and prevent DNA end reannealing and rapid repair. This is Three-prime repair exonuclease 1 from Homo sapiens (Human).